The following is a 117-amino-acid chain: ATP-dependent Clp protease adapter protein ClpS 1 (117 aa).

Positions 1–33 (MIAMPVRMQQGSEGDGGGPSRGTSVITRTKPKT) are disordered.

Belongs to the ClpS family. As to quaternary structure, binds to the N-terminal domain of the chaperone ClpA.

Its function is as follows. Involved in the modulation of the specificity of the ClpAP-mediated ATP-dependent protein degradation. The chain is ATP-dependent Clp protease adapter protein ClpS 1 from Rhizobium meliloti (strain 1021) (Ensifer meliloti).